We begin with the raw amino-acid sequence, 252 residues long: Mediator of RNA polymerase II transcription subunit 20 (252 aa).

It belongs to the Mediator complex subunit 20 family. In terms of assembly, component of the Mediator complex, which includes at least CDK8, MED4, MED6, MED11, MED14, MED17, MED18, MED20, MED21, MED22, MED27, MED28, MED30 and MED31.

The protein resides in the nucleus. Its function is as follows. Component of the Mediator complex, a coactivator involved in the regulated transcription of nearly all RNA polymerase II-dependent genes. Mediator functions as a bridge to convey information from gene-specific regulatory proteins to the basal RNA polymerase II transcription machinery. Mediator is recruited to promoters by direct interactions with regulatory proteins and serves as a scaffold for the assembly of a functional preinitiation complex with RNA polymerase II and the general transcription factors. Required for activated transcription of the MtnA gene. The protein is Mediator of RNA polymerase II transcription subunit 20 (MED20) of Drosophila melanogaster (Fruit fly).